The primary structure comprises 185 residues: Large ribosomal subunit protein uL5 (185 aa).

It belongs to the universal ribosomal protein uL5 family. In terms of assembly, part of the 50S ribosomal subunit; part of the 5S rRNA/L5/L18/L25 subcomplex. Contacts the 5S rRNA and the P site tRNA. Forms a bridge to the 30S subunit in the 70S ribosome.

In terms of biological role, this is one of the proteins that bind and probably mediate the attachment of the 5S RNA into the large ribosomal subunit, where it forms part of the central protuberance. In the 70S ribosome it contacts protein S13 of the 30S subunit (bridge B1b), connecting the 2 subunits; this bridge is implicated in subunit movement. Contacts the P site tRNA; the 5S rRNA and some of its associated proteins might help stabilize positioning of ribosome-bound tRNAs. In Sinorhizobium medicae (strain WSM419) (Ensifer medicae), this protein is Large ribosomal subunit protein uL5.